Reading from the N-terminus, the 283-residue chain is Phosphatidylserine decarboxylase proenzyme (283 aa).

Residues D90, H143, and S248 each act as charge relay system; for autoendoproteolytic cleavage activity in the active site. S248 acts as the Schiff-base intermediate with substrate; via pyruvic acid; for decarboxylase activity in catalysis. Pyruvic acid (Ser); by autocatalysis is present on S248.

The protein belongs to the phosphatidylserine decarboxylase family. PSD-B subfamily. Prokaryotic type I sub-subfamily. Heterodimer of a large membrane-associated beta subunit and a small pyruvoyl-containing alpha subunit. The cofactor is pyruvate. Post-translationally, is synthesized initially as an inactive proenzyme. Formation of the active enzyme involves a self-maturation process in which the active site pyruvoyl group is generated from an internal serine residue via an autocatalytic post-translational modification. Two non-identical subunits are generated from the proenzyme in this reaction, and the pyruvate is formed at the N-terminus of the alpha chain, which is derived from the carboxyl end of the proenzyme. The autoendoproteolytic cleavage occurs by a canonical serine protease mechanism, in which the side chain hydroxyl group of the serine supplies its oxygen atom to form the C-terminus of the beta chain, while the remainder of the serine residue undergoes an oxidative deamination to produce ammonia and the pyruvoyl prosthetic group on the alpha chain. During this reaction, the Ser that is part of the protease active site of the proenzyme becomes the pyruvoyl prosthetic group, which constitutes an essential element of the active site of the mature decarboxylase.

It localises to the cell membrane. The catalysed reaction is a 1,2-diacyl-sn-glycero-3-phospho-L-serine + H(+) = a 1,2-diacyl-sn-glycero-3-phosphoethanolamine + CO2. It functions in the pathway phospholipid metabolism; phosphatidylethanolamine biosynthesis; phosphatidylethanolamine from CDP-diacylglycerol: step 2/2. Functionally, catalyzes the formation of phosphatidylethanolamine (PtdEtn) from phosphatidylserine (PtdSer). This is Phosphatidylserine decarboxylase proenzyme from Francisella tularensis subsp. holarctica (strain OSU18).